A 349-amino-acid polypeptide reads, in one-letter code: 5-deoxyribose 1-phosphate isomerase (349 aa).

Substrate-binding positions include arginine 49–alanine 51, arginine 92, and glutamine 199. The Proton donor role is filled by aspartate 240. Asparagine 250–lysine 251 lines the substrate pocket.

The protein belongs to the EIF-2B alpha/beta/delta subunits family. DrdI subfamily.

The enzyme catalyses 5-deoxy-alpha-D-ribose 1-phosphate = 5-deoxy-D-ribulose 1-phosphate. The protein operates within carbohydrate degradation. Functionally, catalyzes the isomerization of 5-deoxy-alpha-D-ribose 1-phosphate to 5-deoxy-D-ribulose 1-phosphate, as part of a 5-deoxyribose salvage pathway that recycles this toxic radical SAM enzyme by-product to mainstream metabolites. The polypeptide is 5-deoxyribose 1-phosphate isomerase (Clostridium botulinum (strain Loch Maree / Type A3)).